Consider the following 437-residue polypeptide: Trigger factor (437 aa).

Residues G163–P248 form the PPIase FKBP-type domain.

Belongs to the FKBP-type PPIase family. Tig subfamily.

It is found in the cytoplasm. It catalyses the reaction [protein]-peptidylproline (omega=180) = [protein]-peptidylproline (omega=0). In terms of biological role, involved in protein export. Acts as a chaperone by maintaining the newly synthesized protein in an open conformation. Functions as a peptidyl-prolyl cis-trans isomerase. The protein is Trigger factor (tig) of Neisseria meningitidis serogroup A / serotype 4A (strain DSM 15465 / Z2491).